The sequence spans 414 residues: Translation initiation factor 2 subunit gamma (414 aa).

Residues 7 to 204 form the tr-type G domain; the sequence is QPEVNIGLVG…ALQTEIATPD (198 aa). Residues 16-23 form a G1 region; it reads GHVDHGKT. Residues aspartate 19, threonine 23, glycine 44, and serine 46 each coordinate Mg(2+). A GTP-binding site is contributed by 19 to 24; the sequence is DHGKTT. Residues 44–48 form a G2 region; the sequence is GISIR. The segment at 91–94 is G3; sequence DAPG. GTP is bound by residues 147–150 and 182–184; these read NKVD and SAE. Residues 147–150 are G4; it reads NKVD. A G5 region spans residues 182-184; that stretch reads SAE.

This sequence belongs to the TRAFAC class translation factor GTPase superfamily. Classic translation factor GTPase family. EIF2G subfamily. Heterotrimer composed of an alpha, a beta and a gamma chain. It depends on Mg(2+) as a cofactor.

The enzyme catalyses GTP + H2O = GDP + phosphate + H(+). EIF-2 functions in the early steps of protein synthesis by forming a ternary complex with GTP and initiator tRNA. This is Translation initiation factor 2 subunit gamma from Halobacterium salinarum (strain ATCC 29341 / DSM 671 / R1).